The primary structure comprises 661 residues: Pumilio domain-containing protein C56F2.08c (661 aa).

The RRM domain occupies 1 to 74 (MLYVSNLPVG…GPVQVMLAKP (74 aa)). Serine 102 is modified (phosphoserine). At threonine 104 the chain carries Phosphothreonine. A Phosphoserine modification is found at serine 105. Residues 129-482 (INLDIVDSMI…RLMEEVGMTS (354 aa)) form the PUM-HD domain. 4 Pumilio repeats span residues 191–226 (SMLD…AMLE), 227–263 (RIAP…LIVK), 264–302 (HLRP…VMAR), and 374–410 (HLAT…LLLK). Phosphoserine is present on residues serine 482, serine 486, serine 488, and serine 490.

The protein resides in the cytoplasm. The sequence is that of Pumilio domain-containing protein C56F2.08c from Schizosaccharomyces pombe (strain 972 / ATCC 24843) (Fission yeast).